We begin with the raw amino-acid sequence, 117 residues long: Large ribosomal subunit protein uL18 (117 aa).

A compositionally biased stretch (basic residues) spans 1-17 (MNLSRNKARKVKQKRLR). The segment at 1–23 (MNLSRNKARKVKQKRLRAKSELS) is disordered.

Belongs to the universal ribosomal protein uL18 family. In terms of assembly, part of the 50S ribosomal subunit; part of the 5S rRNA/L5/L18/L25 subcomplex. Contacts the 5S and 23S rRNAs.

Functionally, this is one of the proteins that bind and probably mediate the attachment of the 5S RNA into the large ribosomal subunit, where it forms part of the central protuberance. This chain is Large ribosomal subunit protein uL18, found in Mycoplasmopsis synoviae (strain 53) (Mycoplasma synoviae).